Reading from the N-terminus, the 121-residue chain is Large ribosomal subunit protein bL20 (121 aa).

Belongs to the bacterial ribosomal protein bL20 family.

In terms of biological role, binds directly to 23S ribosomal RNA and is necessary for the in vitro assembly process of the 50S ribosomal subunit. It is not involved in the protein synthesizing functions of that subunit. In Wolbachia sp. subsp. Drosophila simulans (strain wRi), this protein is Large ribosomal subunit protein bL20.